Reading from the N-terminus, the 257-residue chain is MRPDGRKPAQLRPIKIIRDFNIYAEGSVLIEFGNTKVIVTASVEDKVPPFLKGTGQGWITAEYSMIPRASETRSLREVVRGSPSGRTHEIQRLIGRSLRAAVDLKKLGEKTIWIDCDVIQADGGTRVASITGAFIAVADACIKLTKQNLVKANPLKDYVAAISVGKVRNEIVLDLNYTEDSNAQVDMNLVMTGKGEFVEIGATGEENTFSQEDFNKMLEYGKSGIERLIKIQKEFIEGIPSIGHWERKNIKEFVYKE.

Phosphate is bound by residues Arg86 and 124–126; that span reads GTR.

This sequence belongs to the RNase PH family. In terms of assembly, homohexameric ring arranged as a trimer of dimers.

It catalyses the reaction tRNA(n+1) + phosphate = tRNA(n) + a ribonucleoside 5'-diphosphate. In terms of biological role, phosphorolytic 3'-5' exoribonuclease that plays an important role in tRNA 3'-end maturation. Removes nucleotide residues following the 3'-CCA terminus of tRNAs; can also add nucleotides to the ends of RNA molecules by using nucleoside diphosphates as substrates, but this may not be physiologically important. Probably plays a role in initiation of 16S rRNA degradation (leading to ribosome degradation) during starvation. The polypeptide is Ribonuclease PH (Sulfurihydrogenibium sp. (strain YO3AOP1)).